Reading from the N-terminus, the 359-residue chain is 1-deoxy-D-xylulose 5-phosphate reductoisomerase (359 aa).

Thr7, Gly8, Ser9, Ile10, Ala31, Asn33, and Asn111 together coordinate NADPH. Lys112 lines the 1-deoxy-D-xylulose 5-phosphate pocket. Residue Glu113 coordinates NADPH. Asp131 contacts Mn(2+). The 1-deoxy-D-xylulose 5-phosphate site is built by Ser132, Glu133, Ser155, and His178. A Mn(2+)-binding site is contributed by Glu133. Gly184 is an NADPH binding site. 1-deoxy-D-xylulose 5-phosphate is bound by residues Ser191, Asn196, Lys197, and Glu200. Glu200 serves as a coordination point for Mn(2+).

This sequence belongs to the DXR family. Mg(2+) serves as cofactor. Mn(2+) is required as a cofactor.

The enzyme catalyses 2-C-methyl-D-erythritol 4-phosphate + NADP(+) = 1-deoxy-D-xylulose 5-phosphate + NADPH + H(+). It functions in the pathway isoprenoid biosynthesis; isopentenyl diphosphate biosynthesis via DXP pathway; isopentenyl diphosphate from 1-deoxy-D-xylulose 5-phosphate: step 1/6. Its function is as follows. Catalyzes the NADPH-dependent rearrangement and reduction of 1-deoxy-D-xylulose-5-phosphate (DXP) to 2-C-methyl-D-erythritol 4-phosphate (MEP). In Campylobacter hominis (strain ATCC BAA-381 / DSM 21671 / CCUG 45161 / LMG 19568 / NCTC 13146 / CH001A), this protein is 1-deoxy-D-xylulose 5-phosphate reductoisomerase.